The chain runs to 197 residues: V-type ATP synthase subunit E 2 (197 aa).

This sequence belongs to the V-ATPase E subunit family.

In terms of biological role, produces ATP from ADP in the presence of a proton gradient across the membrane. The protein is V-type ATP synthase subunit E 2 of Clostridium tetani (strain Massachusetts / E88).